The chain runs to 429 residues: MDRLLACLLGFLLIASVGSHAARTPEQYWKSALPNSPIPSSLSQLLSTAGGGTSVNVGGGGVHVDAGHGKPGGTTVDVGKGGVGVNVKPGYGKPGGTTVGVGKGGVGVNVKPGYGKPGGTSVGVGKGGVGVNVQPGYGKPGGTTVGVGKGGVGVNVQPGYGKPGGTTVGVGKGGVGVNVKPRGKPVHVNVAPFIYNYAATETQLHDDPNVALFFLEKDLHPGKTMAVHFTATTAGEKFLPRSEADAMPFSSEKVPEILSRFSVKPGSVEAAEMAQTLRDCEAPPAQGERKACATSLESMVDFATSSLGTSHVRAASTVVGKEGSPEQEYTVTAVKRAAAGGDQDQLVACHAEPYAYAVFACHLTRATRAYAVSMAGRDGTGVEAVAVCHADTAGWNPKHVAFQVLKVKPGTVPVCHFLPQDHVVWTRSG.

The first 21 residues, 1-21 (MDRLLACLLGFLLIASVGSHA), serve as a signal peptide directing secretion. The disordered stretch occupies residues 59–81 (GGGVHVDAGHGKPGGTTVDVGKG). In terms of domain architecture, BURP spans 213–428 (FFLEKDLHPG…PQDHVVWTRS (216 aa)).

In terms of tissue distribution, expressed in stems, leaves, shoot, panicles and stamen.

This Oryza sativa subsp. japonica (Rice) protein is BURP domain-containing protein 3 (BURP3).